A 100-amino-acid polypeptide reads, in one-letter code: Urease subunit gamma (100 aa).

Belongs to the urease gamma subunit family. In terms of assembly, heterotrimer of UreA (gamma), UreB (beta) and UreC (alpha) subunits. Three heterotrimers associate to form the active enzyme.

The protein localises to the cytoplasm. The enzyme catalyses urea + 2 H2O + H(+) = hydrogencarbonate + 2 NH4(+). Its pathway is nitrogen metabolism; urea degradation; CO(2) and NH(3) from urea (urease route): step 1/1. This Ruegeria sp. (strain TM1040) (Silicibacter sp.) protein is Urease subunit gamma.